The primary structure comprises 85 residues: UPF0386 protein Arad_1912 (85 aa).

The protein belongs to the UPF0386 family.

In Rhizobium rhizogenes (strain K84 / ATCC BAA-868) (Agrobacterium radiobacter), this protein is UPF0386 protein Arad_1912.